The chain runs to 116 residues: Non-specific lipid transfer protein GPI-anchored 17 (116 aa).

A signal peptide spans 1-24; the sequence is MKIGVVLVLLTVFVVVMSSTSVSA. 3 disulfide bridges follow: Cys-31–Cys-74, Cys-42–Cys-58, and Cys-59–Cys-99. Asn-107 is lipidated: GPI-anchor amidated asparagine. Residues 108–116 constitute a propeptide, removed in mature form; that stretch reads GKNFKNTSL. A glycan (N-linked (GlcNAc...) asparagine) is linked at Asn-113.

The protein belongs to the plant LTP family. Expressed in seedlings, preferentially in roots.

The protein resides in the cell membrane. Its function is as follows. Probable lipid transfer protein. This is Non-specific lipid transfer protein GPI-anchored 17 from Arabidopsis thaliana (Mouse-ear cress).